A 200-amino-acid chain; its full sequence is Small ribosomal subunit protein uS4 (200 aa).

The tract at residues 20 to 41 (SGTGKELEKRPYAPGQHGPNQR) is disordered. An S4 RNA-binding domain is found at 92 to 155 (ARLDAVVYSL…LKLDIIAESV (64 aa)).

This sequence belongs to the universal ribosomal protein uS4 family. Part of the 30S ribosomal subunit. Contacts protein S5. The interaction surface between S4 and S5 is involved in control of translational fidelity.

One of the primary rRNA binding proteins, it binds directly to 16S rRNA where it nucleates assembly of the body of the 30S subunit. In terms of biological role, with S5 and S12 plays an important role in translational accuracy. The chain is Small ribosomal subunit protein uS4 from Staphylococcus saprophyticus subsp. saprophyticus (strain ATCC 15305 / DSM 20229 / NCIMB 8711 / NCTC 7292 / S-41).